The sequence spans 80 residues: Defensin coprisin (80 aa).

The N-terminal stretch at 1–20 (MAKLIAFALVASLCLSMVLC) is a signal peptide. Residues 21 to 37 (NPLPEEVQEEGLVRQKR) constitute a propeptide that is removed on maturation. Disulfide bonds link Cys-40–Cys-71, Cys-57–Cys-76, and Cys-61–Cys-78.

Belongs to the invertebrate defensin family. Type 1 subfamily.

Its subcellular location is the secreted. The protein resides in the target cell membrane. Its function is as follows. Potent broad-spectrum antibacterial peptide against both Gram-positive (B.subtilis, S.epidermidis, and S.aureus) and Gram-negative bacteria (E.coli, S.typhimurium, and P.aeruginosa). Is also active against all antibiotic-resistant bacterial strains tested. Induces apoptosis in C.albicans, but does not disrupt the fungal plasma membrane at all. Acts by permeabilizing the bacterial cell membrane, but not human membranes. Also shows potent anti-inflammatory activities, since it reduces both LPS-induced nitric oxide release and pro-inflammatory cytokine production. Anti-inflammatory activities are initiated by suppressing the binding of LPS to toll-like receptor 4 (TLR4), and subsequently inhibiting the phosphorylation of p38 mitogen-activated protein kinase (MAPK) and nuclear translocation of NF-kB (TNFRSF11A). Does not show hemolytic activity against human erythrocytes. The sequence is that of Defensin coprisin from Copris tripartitus (Dung beetle).